The primary structure comprises 259 residues: 5'-nucleotidase SurE (259 aa).

Residues Asp8, Asp9, Ser40, and Asn92 each contribute to the a divalent metal cation site.

Belongs to the SurE nucleotidase family. A divalent metal cation serves as cofactor.

It is found in the cytoplasm. The catalysed reaction is a ribonucleoside 5'-phosphate + H2O = a ribonucleoside + phosphate. Nucleotidase that shows phosphatase activity on nucleoside 5'-monophosphates. In Xanthomonas oryzae pv. oryzae (strain MAFF 311018), this protein is 5'-nucleotidase SurE.